Reading from the N-terminus, the 255-residue chain is Hydroxyacylglutathione hydrolase (255 aa).

Residues His-56, His-58, Asp-60, His-61, His-114, Asp-133, and His-171 each coordinate Zn(2+).

The protein belongs to the metallo-beta-lactamase superfamily. Glyoxalase II family. As to quaternary structure, monomer. Zn(2+) is required as a cofactor.

The catalysed reaction is an S-(2-hydroxyacyl)glutathione + H2O = a 2-hydroxy carboxylate + glutathione + H(+). Its pathway is secondary metabolite metabolism; methylglyoxal degradation; (R)-lactate from methylglyoxal: step 2/2. Its function is as follows. Thiolesterase that catalyzes the hydrolysis of S-D-lactoyl-glutathione to form glutathione and D-lactic acid. This Nitrobacter hamburgensis (strain DSM 10229 / NCIMB 13809 / X14) protein is Hydroxyacylglutathione hydrolase.